The following is a 285-amino-acid chain: Cytosolic Fe-S cluster assembly factor CFD1 (285 aa).

30-37 (GKGGVGKS) lines the ATP pocket. The [4Fe-4S] cluster site is built by C206 and C209.

The protein belongs to the Mrp/NBP35 ATP-binding proteins family. NUBP2/CFD1 subfamily. In terms of assembly, heterotetramer of 2 NBP35 and 2 CFD1 chains. The cofactor is [4Fe-4S] cluster.

The protein resides in the cytoplasm. Functionally, component of the cytosolic iron-sulfur (Fe/S) protein assembly (CIA) machinery. Required for maturation of extramitochondrial Fe-S proteins. The NBP35-CFD1 heterotetramer forms a Fe-S scaffold complex, mediating the de novo assembly of an Fe-S cluster and its transfer to target apoproteins. Required for biogenesis and export of both ribosomal subunits, which may reflect a role in assembly of the Fe/S clusters in RLI1, a protein which performs rRNA processing and ribosome export. The polypeptide is Cytosolic Fe-S cluster assembly factor CFD1 (Candida glabrata (strain ATCC 2001 / BCRC 20586 / JCM 3761 / NBRC 0622 / NRRL Y-65 / CBS 138) (Yeast)).